The primary structure comprises 304 residues: MNDLLKGSFELPRGQSSREGDVELGEQQGGDQGLEDFFKKVQVIDKQYDKLDKLLKKLQASHEESKSVTKAPAMKAIKKTMEKDVDEVGSIARFIKGKLEELDRENLANRQKPGCAKGSGVDRSRTATTLSLKKKLKDKMAEFQVLRENIQQEYRDVVDRRVYTVTGERADEDTIDELIETGNSEQIFQKAIQEQGRGQVMDTLAEIQERHDAVRDLEKKLLDLQQIFLDMAVLVDAQGEMLDNIESQVSSAVDHVQSGNTALQRAKSLQKNSRKWMCIAIIILLIVVAVIVVGVLKPWKNKSA.

N-acetylmethionine is present on Met1. The segment at 1 to 30 (MNDLLKGSFELPRGQSSREGDVELGEQQGG) is disordered. The Cytoplasmic segment spans residues 1-275 (MNDLLKGSFE…AKSLQKNSRK (275 aa)). Coiled coils occupy residues 34-67 (LEDFFKKVQVIDKQYDKLDKLLKKLQASHEESKS) and 129-162 (TLSLKKKLKDKMAEFQVLRENIQQEYRDVVDRRV). The t-SNARE coiled-coil homology domain occupies 204–266 (LAEIQERHDA…QSGNTALQRA (63 aa)). Residues 276–296 (WMCIAIIILLIVVAVIVVGVL) traverse the membrane as a helical; Anchor for type IV membrane protein segment. Over 297–304 (KPWKNKSA) the chain is Vesicular.

The protein belongs to the syntaxin family. In terms of assembly, part of the t-SNARE complex. Widely expressed in all tissues throughout plant development.

Its subcellular location is the cell membrane. Functionally, vesicle trafficking protein that functions in the secretory pathway. Acts in coordination with SYP123 to mediate tip-focused membrane trafficking for root hair tip growth. Functions in root hair elongation by forming SNARE complexes with VAMP721,VAMP722 or VAMP724. Involved in cytokinesis. Acts as a cell plate-specific syntaxin, required for the fusion of vesicles at the plane of cell division. Required for secretory trafficking to the plasma membrane during interphase. Involved in the regulation of density of the H(+) ATPase proteins at the plasma membrane of root and shoot in epidermal cells. Modulation of SYP132 expression by auxin affects clathrin-sensitive H(+) ATPase traffic from the plasma membrane, and influences apoplastic acidification and plant growth. This is Syntaxin-132 from Arabidopsis thaliana (Mouse-ear cress).